A 424-amino-acid chain; its full sequence is C4-dicarboxylate transport protein (424 aa).

Transmembrane regions (helical) follow at residues 4–24 (SLFK…VLLG), 44–64 (LIKM…IAGM), 76–96 (VALI…LVVV), 142–162 (IGAF…LFGF), 184–206 (VFFG…AMAF), 222–242 (LIVC…GLIA), 326–346 (IWHQ…AAGV), and 352–372 (IVLA…LALI).

This sequence belongs to the dicarboxylate/amino acid:cation symporter (DAACS) (TC 2.A.23) family.

It is found in the cell inner membrane. Functionally, responsible for the transport of dicarboxylates such as succinate, fumarate, and malate from the periplasm across the membrane. The chain is C4-dicarboxylate transport protein from Erwinia tasmaniensis (strain DSM 17950 / CFBP 7177 / CIP 109463 / NCPPB 4357 / Et1/99).